A 213-amino-acid chain; its full sequence is uncharacterized protein (213 aa).

This is an uncharacterized protein from Acidianus two-tailed virus (ATV).